Here is a 206-residue protein sequence, read N- to C-terminus: Thymidylate kinase (206 aa).

Gly-11–Thr-18 provides a ligand contact to ATP.

This sequence belongs to the thymidylate kinase family.

It carries out the reaction dTMP + ATP = dTDP + ADP. Its function is as follows. Phosphorylation of dTMP to form dTDP in both de novo and salvage pathways of dTTP synthesis. The protein is Thymidylate kinase (tmk) of Deinococcus radiodurans (strain ATCC 13939 / DSM 20539 / JCM 16871 / CCUG 27074 / LMG 4051 / NBRC 15346 / NCIMB 9279 / VKM B-1422 / R1).